The chain runs to 61 residues: UPF0434 protein PSPTO_3844 (61 aa).

The protein belongs to the UPF0434 family.

This Pseudomonas syringae pv. tomato (strain ATCC BAA-871 / DC3000) protein is UPF0434 protein PSPTO_3844.